Reading from the N-terminus, the 150-residue chain is Large ribosomal subunit protein bL9 (150 aa).

This sequence belongs to the bacterial ribosomal protein bL9 family.

Binds to the 23S rRNA. In Shewanella pealeana (strain ATCC 700345 / ANG-SQ1), this protein is Large ribosomal subunit protein bL9.